Consider the following 413-residue polypeptide: Tyrosine--tRNA ligase (413 aa).

L-tyrosine is bound at residue Tyr-34. Residues Cys-39–Asn-48 carry the 'HIGH' region motif. Tyr-171 and Gln-175 together coordinate L-tyrosine. A 'KMSKS' region motif is present at residues Lys-231 to Thr-235. Lys-234 lines the ATP pocket. The region spanning Ile-346–Ile-411 is the S4 RNA-binding domain.

Belongs to the class-I aminoacyl-tRNA synthetase family. TyrS type 1 subfamily. As to quaternary structure, homodimer.

The protein resides in the cytoplasm. The enzyme catalyses tRNA(Tyr) + L-tyrosine + ATP = L-tyrosyl-tRNA(Tyr) + AMP + diphosphate + H(+). Its function is as follows. Catalyzes the attachment of tyrosine to tRNA(Tyr) in a two-step reaction: tyrosine is first activated by ATP to form Tyr-AMP and then transferred to the acceptor end of tRNA(Tyr). In Orientia tsutsugamushi (strain Ikeda) (Rickettsia tsutsugamushi), this protein is Tyrosine--tRNA ligase.